A 506-amino-acid chain; its full sequence is Maturase K (506 aa).

The protein belongs to the intron maturase 2 family. MatK subfamily.

Its subcellular location is the plastid. The protein resides in the chloroplast. In terms of biological role, usually encoded in the trnK tRNA gene intron. Probably assists in splicing its own and other chloroplast group II introns. In Andromeda polifolia (Bog rosemary), this protein is Maturase K.